Reading from the N-terminus, the 460-residue chain is Argininosuccinate lyase (460 aa).

Belongs to the lyase 1 family. Argininosuccinate lyase subfamily.

It is found in the cytoplasm. It carries out the reaction 2-(N(omega)-L-arginino)succinate = fumarate + L-arginine. Its pathway is amino-acid biosynthesis; L-arginine biosynthesis; L-arginine from L-ornithine and carbamoyl phosphate: step 3/3. The sequence is that of Argininosuccinate lyase from Maridesulfovibrio salexigens (strain ATCC 14822 / DSM 2638 / NCIMB 8403 / VKM B-1763) (Desulfovibrio salexigens).